The sequence spans 813 residues: ATP-dependent zinc metalloprotease FTSH 10, mitochondrial (813 aa).

The N-terminal 86 residues, 1 to 86 (MIFSKLGSSL…FANPRLRRFF (86 aa)), are a transit peptide targeting the mitochondrion. Positions 93-129 (KKNYENYYPKDSKKAPKNEQKSESRDGSKKNENENAG) are disordered. The span at 94–125 (KNYENYYPKDSKKAPKNEQKSESRDGSKKNEN) shows a compositional bias: basic and acidic residues. The helical transmembrane segment at 139–157 (MLIPLMAIALILSTFSLGS) threads the bilayer. 367 to 374 (GPPGTGKT) is a binding site for ATP. His592 contributes to the Zn(2+) binding site. Residue Glu593 is part of the active site. Residues His596 and Asp668 each contribute to the Zn(2+) site. The span at 764-790 (RPFKSGETTNYDRFKSGFEESEKESQK) shows a compositional bias: basic and acidic residues. Positions 764-813 (RPFKSGETTNYDRFKSGFEESEKESQKESVPVKPVEDDGIPPLEPQVVPT) are disordered.

In the N-terminal section; belongs to the AAA ATPase family. It in the C-terminal section; belongs to the peptidase M41 family. It depends on Zn(2+) as a cofactor.

It localises to the mitochondrion inner membrane. In terms of biological role, probable ATP-dependent zinc metallopeptidase. Involved in the assembly and/or stability of the complexes I and V of the mitochondrial oxidative phosphorylation system. The polypeptide is ATP-dependent zinc metalloprotease FTSH 10, mitochondrial (FTSH10) (Arabidopsis thaliana (Mouse-ear cress)).